Here is a 620-residue protein sequence, read N- to C-terminus: Chaperone protein HscA homolog (620 aa).

Belongs to the heat shock protein 70 family.

Its function is as follows. Chaperone involved in the maturation of iron-sulfur cluster-containing proteins. Has a low intrinsic ATPase activity which is markedly stimulated by HscB. This is Chaperone protein HscA homolog from Pseudomonas savastanoi pv. phaseolicola (strain 1448A / Race 6) (Pseudomonas syringae pv. phaseolicola (strain 1448A / Race 6)).